The sequence spans 467 residues: GTPase Obg (467 aa).

Residues 1 to 158 enclose the Obg domain; it reads MFYDEAKIFV…RWLRLELKLL (158 aa). Residues 159–333 form the OBG-type G domain; it reads ADVGLVGLPN…LIRATWERLQ (175 aa). GTP is bound by residues 165 to 172, 190 to 194, 214 to 217, 285 to 288, and 314 to 316; these read GLPNAGKS, FTTLE, DLPG, NKMD, and SAA. Residues Ser172 and Thr192 each contribute to the Mg(2+) site. Residues 352–430 enclose the OCT domain; sequence TLDRSQERWE…VAGRELVWEP (79 aa).

It belongs to the TRAFAC class OBG-HflX-like GTPase superfamily. OBG GTPase family. As to quaternary structure, monomer. Requires Mg(2+) as cofactor.

It localises to the cytoplasm. In terms of biological role, an essential GTPase which binds GTP, GDP and possibly (p)ppGpp with moderate affinity, with high nucleotide exchange rates and a fairly low GTP hydrolysis rate. Plays a role in control of the cell cycle, stress response, ribosome biogenesis and in those bacteria that undergo differentiation, in morphogenesis control. In Thermomicrobium roseum (strain ATCC 27502 / DSM 5159 / P-2), this protein is GTPase Obg.